The primary structure comprises 181 residues: Alkyl hydroperoxide reductase AhpD (181 aa).

Cys131 acts as the Proton donor in catalysis. Residues Cys131 and Cys134 are joined by a disulfide bond. Catalysis depends on Cys134, which acts as the Cysteine sulfenic acid (-SOH) intermediate.

It belongs to the AhpD family.

It carries out the reaction N(6)-[(R)-dihydrolipoyl]-L-lysyl-[lipoyl-carrier protein] + a hydroperoxide = N(6)-[(R)-lipoyl]-L-lysyl-[lipoyl-carrier protein] + an alcohol + H2O. In terms of biological role, antioxidant protein with alkyl hydroperoxidase activity. Required for the reduction of the AhpC active site cysteine residues and for the regeneration of the AhpC enzyme activity. The chain is Alkyl hydroperoxide reductase AhpD from Rhodopseudomonas palustris (strain BisB18).